A 315-amino-acid chain; its full sequence is Cytochrome c biogenesis protein CcsA (315 aa).

Helical transmembrane passes span 17–37 (LGFA…WAVA), 72–92 (ISNL…AQLF), 101–121 (IVSA…SFVL), 146–166 (VIMC…GVFL), 221–241 (SITA…VWAN), 255–272 (TWAL…HTRI), and 282–302 (AILA…VNLL).

This sequence belongs to the CcmF/CycK/Ccl1/NrfE/CcsA family. As to quaternary structure, may interact with ccs1.

The protein localises to the cellular thylakoid membrane. Required during biogenesis of c-type cytochromes (cytochrome c6 and cytochrome f) at the step of heme attachment. This chain is Cytochrome c biogenesis protein CcsA, found in Prochlorococcus marinus (strain NATL2A).